Here is a 333-residue protein sequence, read N- to C-terminus: Lipoyl synthase (333 aa).

The segment covering 1–15 (MSTLVESPVPSNDSQ) has biased composition (polar residues). The interval 1-34 (MSTLVESPVPSNDSQAAAPAAYDPTQKQKSQAKT) is disordered. Residues Cys80, Cys85, Cys91, Cys106, Cys110, Cys113, and Ser320 each coordinate [4Fe-4S] cluster. The Radical SAM core domain maps to 91 to 309 (CFGKGTATFM…EREAYAMGFT (219 aa)).

The protein belongs to the radical SAM superfamily. Lipoyl synthase family. Requires [4Fe-4S] cluster as cofactor.

It is found in the cytoplasm. It carries out the reaction [[Fe-S] cluster scaffold protein carrying a second [4Fe-4S](2+) cluster] + N(6)-octanoyl-L-lysyl-[protein] + 2 oxidized [2Fe-2S]-[ferredoxin] + 2 S-adenosyl-L-methionine + 4 H(+) = [[Fe-S] cluster scaffold protein] + N(6)-[(R)-dihydrolipoyl]-L-lysyl-[protein] + 4 Fe(3+) + 2 hydrogen sulfide + 2 5'-deoxyadenosine + 2 L-methionine + 2 reduced [2Fe-2S]-[ferredoxin]. Its pathway is protein modification; protein lipoylation via endogenous pathway; protein N(6)-(lipoyl)lysine from octanoyl-[acyl-carrier-protein]: step 2/2. Its function is as follows. Catalyzes the radical-mediated insertion of two sulfur atoms into the C-6 and C-8 positions of the octanoyl moiety bound to the lipoyl domains of lipoate-dependent enzymes, thereby converting the octanoylated domains into lipoylated derivatives. The chain is Lipoyl synthase from Bordetella parapertussis (strain 12822 / ATCC BAA-587 / NCTC 13253).